The primary structure comprises 472 residues: Argininosuccinate lyase (472 aa).

The protein belongs to the lyase 1 family. Argininosuccinate lyase subfamily.

The protein localises to the cytoplasm. It carries out the reaction 2-(N(omega)-L-arginino)succinate = fumarate + L-arginine. The protein operates within amino-acid biosynthesis; L-arginine biosynthesis; L-arginine from L-ornithine and carbamoyl phosphate: step 3/3. The protein is Argininosuccinate lyase of Rhodococcus jostii (strain RHA1).